The chain runs to 350 residues: C4-dicarboxylate-binding protein DctB (350 aa).

An N-terminal signal peptide occupies residues 1–18; the sequence is MKSLLACLALMIAGIATA.

The protein belongs to the bacterial solute-binding protein 7 family.

Its subcellular location is the secreted. In terms of biological role, part of the binding-protein-dependent transport system for uptake of C4-dicarboxylates. Responsible for growth on fumarate and succinate but not malate. Is not directly involved in C4-dicarboxylate uptake, but plays a sensory role in the DctS/DctR two-component system which regulates the expression of the dctA C4-dicarboxylate transporter. In Bacillus subtilis (strain 168), this protein is C4-dicarboxylate-binding protein DctB (dctB).